The sequence spans 447 residues: Multicopper oxidase mco (447 aa).

The span at 1–25 shows a compositional bias: basic and acidic residues; it reads MMNMKEDKKNTMDMKNMKHHDERKK. The interval 1-28 is disordered; the sequence is MMNMKEDKKNTMDMKNMKHHDERKKLNS. Cu cation is bound by residues His107, His109, His147, His149, His375, His378, His380, His428, Cys429, His430, His434, and Met439.

Belongs to the multicopper oxidase family. Cu cation is required as a cofactor.

The protein resides in the cytoplasm. Its function is as follows. May be involved in copper homeostasis and oxidative stress response. In Staphylococcus epidermidis (strain ATCC 12228 / FDA PCI 1200), this protein is Multicopper oxidase mco (mco).